The sequence spans 396 residues: Maltose/maltodextrin-binding periplasmic protein (396 aa).

The signal sequence occupies residues 1–26; the sequence is MKIKTGARILALSALTTMMFSASALA.

This sequence belongs to the bacterial solute-binding protein 1 family. In terms of assembly, the complex is composed of two ATP-binding proteins (MalK), two transmembrane proteins (MalG and MalF) and a solute-binding protein (MalE).

The protein localises to the periplasm. In terms of biological role, part of the ABC transporter complex MalEFGK involved in maltose/maltodextrin import. Binds maltose and higher maltodextrins. The chain is Maltose/maltodextrin-binding periplasmic protein (malE) from Escherichia coli O157:H7.